Here is a 231-residue protein sequence, read N- to C-terminus: Ribose-5-phosphate isomerase A (231 aa).

Residues 23-26 (SGST), 80-83 (DGAD), and 93-96 (KGGG) contribute to the substrate site. The Proton acceptor role is filled by E102. K120 provides a ligand contact to substrate.

This sequence belongs to the ribose 5-phosphate isomerase family. Homodimer.

The enzyme catalyses aldehydo-D-ribose 5-phosphate = D-ribulose 5-phosphate. It functions in the pathway carbohydrate degradation; pentose phosphate pathway; D-ribose 5-phosphate from D-ribulose 5-phosphate (non-oxidative stage): step 1/1. Functionally, catalyzes the reversible conversion of ribose-5-phosphate to ribulose 5-phosphate. The sequence is that of Ribose-5-phosphate isomerase A from Prochlorococcus marinus subsp. pastoris (strain CCMP1986 / NIES-2087 / MED4).